Reading from the N-terminus, the 306-residue chain is HTH-type transcriptional regulator AlkR (306 aa).

Residues 207-305 (SNALAAIHAY…EQSPKHYRQQ (99 aa)) enclose the HTH araC/xylS-type domain. DNA-binding regions (H-T-H motif) lie at residues 224 to 245 (ESLA…QSIV) and 272 to 295 (IQQI…KRQF).

It functions in the pathway hydrocarbon metabolism; alkane degradation. In terms of biological role, this protein activates the expression of the alkane 1-monooxygenase AlkM. In Acinetobacter baylyi (strain ATCC 33305 / BD413 / ADP1), this protein is HTH-type transcriptional regulator AlkR (alkR).